We begin with the raw amino-acid sequence, 398 residues long: Cytochrome b (398 aa).

Residues 45–65 (LGSIAGIALVIQIITGVILAM) form a helical membrane-spanning segment. Histidine 95 and histidine 109 together coordinate heme b. A run of 8 helical transmembrane segments spans residues 97-117 (VGAS…LYYG), 129-149 (IGII…VLPW), 164-184 (FSAI…GFSV), 192-212 (FFSL…LHLL), 245-265 (FVGF…EPNY), 304-324 (LAGV…PWLD), 335-355 (PIYR…GYLG), and 364-384 (IIIS…VLPL). Heme b-binding residues include histidine 196 and histidine 210.

This sequence belongs to the cytochrome b family. The main subunits of complex b-c1 are: cytochrome b, cytochrome c1 and the Rieske protein. Heme b serves as cofactor.

It is found in the cell membrane. Its function is as follows. Component of the ubiquinol-cytochrome c reductase complex (complex III or cytochrome b-c1 complex), which is a respiratory chain that generates an electrochemical potential coupled to ATP synthesis. This chain is Cytochrome b (petB), found in Rickettsia typhi (strain ATCC VR-144 / Wilmington).